Here is a 251-residue protein sequence, read N- to C-terminus: Octanoyltransferase (251 aa).

The 182-residue stretch at 49 to 230 folds into the BPL/LPL catalytic domain; the sequence is DEIADQILVL…DLDDAFAGRL (182 aa). Substrate is bound by residues 87-94, 160-162, and 173-175; these read RGGRITWH, ALG, and GLA. Cys-191 functions as the Acyl-thioester intermediate in the catalytic mechanism.

This sequence belongs to the LipB family.

The protein resides in the cytoplasm. It catalyses the reaction octanoyl-[ACP] + L-lysyl-[protein] = N(6)-octanoyl-L-lysyl-[protein] + holo-[ACP] + H(+). Its pathway is protein modification; protein lipoylation via endogenous pathway; protein N(6)-(lipoyl)lysine from octanoyl-[acyl-carrier-protein]: step 1/2. Catalyzes the transfer of endogenously produced octanoic acid from octanoyl-acyl-carrier-protein onto the lipoyl domains of lipoate-dependent enzymes. Lipoyl-ACP can also act as a substrate although octanoyl-ACP is likely to be the physiological substrate. This is Octanoyltransferase from Corynebacterium efficiens (strain DSM 44549 / YS-314 / AJ 12310 / JCM 11189 / NBRC 100395).